The primary structure comprises 108 residues: uncharacterized protein (108 aa).

Residues leucine 64–isoleucine 84 form a helical membrane-spanning segment.

It localises to the membrane. This is an uncharacterized protein from Schizosaccharomyces pombe (strain 972 / ATCC 24843) (Fission yeast).